Reading from the N-terminus, the 238-residue chain is Ribonuclease PH (238 aa).

Residues R86 and 124-126 contribute to the phosphate site; that span reads GTR.

This sequence belongs to the RNase PH family. In terms of assembly, homohexameric ring arranged as a trimer of dimers.

The enzyme catalyses tRNA(n+1) + phosphate = tRNA(n) + a ribonucleoside 5'-diphosphate. Functionally, phosphorolytic 3'-5' exoribonuclease that plays an important role in tRNA 3'-end maturation. Removes nucleotide residues following the 3'-CCA terminus of tRNAs; can also add nucleotides to the ends of RNA molecules by using nucleoside diphosphates as substrates, but this may not be physiologically important. Probably plays a role in initiation of 16S rRNA degradation (leading to ribosome degradation) during starvation. This is Ribonuclease PH from Geobacter metallireducens (strain ATCC 53774 / DSM 7210 / GS-15).